The primary structure comprises 225 residues: Orotate phosphoribosyltransferase (225 aa).

Position 29 (Lys-29) interacts with 5-phospho-alpha-D-ribose 1-diphosphate. 37-38 (FF) contacts orotate. 5-phospho-alpha-D-ribose 1-diphosphate is bound by residues 75–76 (YK), Arg-101, Lys-102, Lys-105, His-107, and 126–134 (DDVISAGTS). Ser-130 and Arg-158 together coordinate orotate.

This sequence belongs to the purine/pyrimidine phosphoribosyltransferase family. PyrE subfamily. Homodimer. Requires Mg(2+) as cofactor.

It carries out the reaction orotidine 5'-phosphate + diphosphate = orotate + 5-phospho-alpha-D-ribose 1-diphosphate. The protein operates within pyrimidine metabolism; UMP biosynthesis via de novo pathway; UMP from orotate: step 1/2. Catalyzes the transfer of a ribosyl phosphate group from 5-phosphoribose 1-diphosphate to orotate, leading to the formation of orotidine monophosphate (OMP). This chain is Orotate phosphoribosyltransferase, found in Ralstonia pickettii (strain 12J).